A 156-amino-acid chain; its full sequence is Large ribosomal subunit protein uL15 (156 aa).

The disordered stretch occupies residues 1–48; the sequence is MKLHDLKPTPGSRKDRKRVGRGPGGTDKTAGRGHKGQKSRSGAGKGAF.

It belongs to the universal ribosomal protein uL15 family. Part of the 50S ribosomal subunit. Contacts proteins L4, L21 and L35.

Functionally, binds to the 23S rRNA. The chain is Large ribosomal subunit protein uL15 (rplO) from Deinococcus radiodurans (strain ATCC 13939 / DSM 20539 / JCM 16871 / CCUG 27074 / LMG 4051 / NBRC 15346 / NCIMB 9279 / VKM B-1422 / R1).